We begin with the raw amino-acid sequence, 205 residues long: Adenylate kinase (205 aa).

Residue 11–16 (GSGKGT) coordinates ATP. The NMP stretch occupies residues 31 to 60 (STGDIFRHNVKSMTPLGVEAKRYIDNGDFV). Residues threonine 32, arginine 37, 58–60 (DFV), 86–89 (GYPR), and glutamine 93 contribute to the AMP site. Positions 127–137 (KRAEIEGRADD) are LID. Arginine 128 is a binding site for ATP. AMP-binding residues include arginine 134 and arginine 145. An ATP-binding site is contributed by glycine 173.

It belongs to the adenylate kinase family. As to quaternary structure, monomer.

It localises to the cytoplasm. It carries out the reaction AMP + ATP = 2 ADP. It participates in purine metabolism; AMP biosynthesis via salvage pathway; AMP from ADP: step 1/1. In terms of biological role, catalyzes the reversible transfer of the terminal phosphate group between ATP and AMP. Plays an important role in cellular energy homeostasis and in adenine nucleotide metabolism. In Micrococcus luteus (strain ATCC 4698 / DSM 20030 / JCM 1464 / CCM 169 / CCUG 5858 / IAM 1056 / NBRC 3333 / NCIMB 9278 / NCTC 2665 / VKM Ac-2230) (Micrococcus lysodeikticus), this protein is Adenylate kinase.